The sequence spans 433 residues: N-lysine methyltransferase SMYD2 (433 aa).

One can recognise an SET domain in the interval 7–241; it reads GGLERFCSPG…PGEEVFTSYI (235 aa). 17 to 19 is a binding site for S-adenosyl-L-methionine; the sequence is KGR. Positions 52, 55, 65, 68, 74, 78, 86, and 90 each coordinate Zn(2+). The MYND-type zinc-finger motif lies at 52–90; that stretch reads CEFCFARKEGLSKCGRCKQAFYCNVECQREDWPMHKLEC. S-adenosyl-L-methionine contacts are provided by residues His137, 206–207, and 258–260; these read NH and YFF.

It belongs to the class V-like SAM-binding methyltransferase superfamily. In terms of assembly, interacts with RNA polymerase II and HELZ. Interacts with SIN3A and HDAC1. Interacts (via MYND-type zinc finger) with EPB41L3. Interacts (via SET domain) with p53/TP53. Interacts with RB1 and HSP90AA1.

The protein resides in the cytoplasm. It localises to the cytosol. Its subcellular location is the nucleus. The catalysed reaction is L-lysyl(4)-[histone H3] + 3 S-adenosyl-L-methionine = N(6),N(6),N(6)-trimethyl-L-lysyl(4)-[histone H3] + 3 S-adenosyl-L-homocysteine + 3 H(+). It catalyses the reaction L-lysyl-[protein] + S-adenosyl-L-methionine = N(6)-methyl-L-lysyl-[protein] + S-adenosyl-L-homocysteine + H(+). Functionally, protein-lysine N-methyltransferase that methylates both histones and non-histone proteins, including p53/TP53 and RB1. Specifically trimethylates histone H3 'Lys-4' (H3K4me3) in vivo. The activity requires interaction with HSP90alpha. Shows even higher methyltransferase activity on p53/TP53. Monomethylates 'Lys-370' of p53/TP53, leading to decreased DNA-binding activity and subsequent transcriptional regulation activity of p53/TP53. Monomethylates RB1 at 'Lys-860'. This is N-lysine methyltransferase SMYD2 (SMYD2) from Bos taurus (Bovine).